The primary structure comprises 349 residues: MGRTLRVAILGATGYTGGELIRLLHRHPGAELSFVSSERFAGQSIAKVYTHLQAVGHLICQPMDAKKACEAADFIFCALPHVTSMEVVPELLQRGAKVVDLSADFRLKSAETYAHWYGTQHLAPELLPQAAYGLPELFRESIKGANLVANPGCYPTSVQLPLFPLLQEGMIDPALVIADSKSGVSGAGRSPAQGTLFAELSEGFKAYKVEAHRHIPEMEQNLALAAGKEIKIRFTPHLLPQSRGILSTCYLRPTSGVNAQRVRDTLMTRYRDEPFVTVLPHGDMPATSDVRGSNACHMGVTEDLRSGWLIIVSVIDNLVKGASGAAVQNFNLMTGWDETTALDSLPMFP.

Cysteine 153 is a catalytic residue.

This sequence belongs to the NAGSA dehydrogenase family. Type 1 subfamily.

Its subcellular location is the cytoplasm. It carries out the reaction N-acetyl-L-glutamate 5-semialdehyde + phosphate + NADP(+) = N-acetyl-L-glutamyl 5-phosphate + NADPH + H(+). It participates in amino-acid biosynthesis; L-arginine biosynthesis; N(2)-acetyl-L-ornithine from L-glutamate: step 3/4. Functionally, catalyzes the NADPH-dependent reduction of N-acetyl-5-glutamyl phosphate to yield N-acetyl-L-glutamate 5-semialdehyde. The sequence is that of N-acetyl-gamma-glutamyl-phosphate reductase from Magnetococcus marinus (strain ATCC BAA-1437 / JCM 17883 / MC-1).